Here is a 124-residue protein sequence, read N- to C-terminus: UPF0482 protein YpsIP31758_1865 (124 aa).

The first 32 residues, 1-32 (MMKINNLPRLIRTFLPATLLMLPLVWQTPALA), serve as a signal peptide directing secretion. Residues 47–68 (GGNNDPMSKEQARQSQQQWDET) form a disordered region.

The protein belongs to the UPF0482 family.

This Yersinia pseudotuberculosis serotype O:1b (strain IP 31758) protein is UPF0482 protein YpsIP31758_1865.